A 397-amino-acid chain; its full sequence is Cathepsin E (397 aa).

Residues M1–G16 form the signal peptide. The propeptide at I17 to F49 is activation peptide. The Peptidase A1 domain maps to Y74–A385. D92 is an active-site residue. C105 and C110 are disulfide-bonded. N139 is a glycosylation site (N-linked (GlcNAc...) asparagine). C268 and C272 are disulfide-bonded. D277 is a catalytic residue. Residues C310 and C344 are joined by a disulfide bond.

This sequence belongs to the peptidase A1 family. As to quaternary structure, homodimer; disulfide-linked. Glycosylated. Contains high mannose-type oligosaccharide. As to expression, found in the larval foregut and adult stomach.

The protein localises to the endosome. It catalyses the reaction Similar to cathepsin D, but slightly broader specificity.. May have a role in immune function. Probably involved in the processing of antigenic peptides during MHC class II-mediated antigen presentation. In Aquarana catesbeiana (American bullfrog), this protein is Cathepsin E (CTSE).